Here is a 122-residue protein sequence, read N- to C-terminus: Large ribosomal subunit protein uL14 (122 aa).

The protein belongs to the universal ribosomal protein uL14 family. As to quaternary structure, part of the 50S ribosomal subunit. Forms a cluster with proteins L3 and L19. In the 70S ribosome, L14 and L19 interact and together make contacts with the 16S rRNA in bridges B5 and B8.

Binds to 23S rRNA. Forms part of two intersubunit bridges in the 70S ribosome. The polypeptide is Large ribosomal subunit protein uL14 (Paracidovorax citrulli (strain AAC00-1) (Acidovorax citrulli)).